Here is a 270-residue protein sequence, read N- to C-terminus: tRNA pseudouridine synthase A (270 aa).

Aspartate 52 (nucleophile) is an active-site residue. Position 110 (tyrosine 110) interacts with substrate. The segment at 251–270 is disordered; that stretch reads TGAADEPAAPHGVTETRMQL.

It belongs to the tRNA pseudouridine synthase TruA family. Homodimer.

It catalyses the reaction uridine(38/39/40) in tRNA = pseudouridine(38/39/40) in tRNA. Functionally, formation of pseudouridine at positions 38, 39 and 40 in the anticodon stem and loop of transfer RNAs. This Roseiflexus sp. (strain RS-1) protein is tRNA pseudouridine synthase A.